We begin with the raw amino-acid sequence, 802 residues long: Aldehyde dehydrogenase family 16 member A1 (802 aa).

The tract at residues 513-554 (SLPSGPETGPSPAPPYGLFVRGRFQSPGTQSSRPIKDSSGKV) is disordered.

It belongs to the aldehyde dehydrogenase family. Interacts with SPG21.

The polypeptide is Aldehyde dehydrogenase family 16 member A1 (Aldh16a1) (Rattus norvegicus (Rat)).